A 182-amino-acid chain; its full sequence is Large ribosomal subunit protein uL6 (182 aa).

The protein belongs to the universal ribosomal protein uL6 family. Part of the 50S ribosomal subunit.

Its function is as follows. This protein binds to the 23S rRNA, and is important in its secondary structure. It is located near the subunit interface in the base of the L7/L12 stalk, and near the tRNA binding site of the peptidyltransferase center. This is Large ribosomal subunit protein uL6 from Dehalococcoides mccartyi (strain ATCC BAA-2266 / KCTC 15142 / 195) (Dehalococcoides ethenogenes (strain 195)).